Reading from the N-terminus, the 146-residue chain is Cyanate hydratase (146 aa).

Active-site residues include arginine 87, glutamate 90, and serine 113.

Belongs to the cyanase family.

The catalysed reaction is cyanate + hydrogencarbonate + 3 H(+) = NH4(+) + 2 CO2. Its function is as follows. Catalyzes the reaction of cyanate with bicarbonate to produce ammonia and carbon dioxide. This is Cyanate hydratase from Nostoc sp. (strain PCC 7120 / SAG 25.82 / UTEX 2576).